A 640-amino-acid chain; its full sequence is Auxin efflux carrier component 3 (640 aa).

At 1-7 (MISWHDL) the chain is on the extracellular side. The chain crosses the membrane as a helical span at residues 8–28 (YTVLTAVIPLYVAMILAYGSV). The Cytoplasmic segment spans residues 29–38 (RWWKIFSPDQ). A helical transmembrane segment spans residues 39–59 (CSGINRFVAIFAVPLLSFHFI). V51 is a binding site for (indol-3-yl)acetate. Topologically, residues 60–71 (STNNPYAMNLRF) are extracellular. The helical transmembrane segment at 72-92 (IAADTLQKIIMLSLLVLWANF) threads the bilayer. Residues 93-101 (TRSGSLEWS) are Cytoplasmic-facing. The chain crosses the membrane as a helical span at residues 102–122 (ITIFSLSTLPNTLVMGIPLLI). Residues N112 and L114 each coordinate (indol-3-yl)acetate. The Extracellular segment spans residues 123-131 (AMYGEYSGS). The helical transmembrane segment at 132-152 (LMVQIVVLQCIIWYTLLLFLF) threads the bilayer. Y145 lines the (indol-3-yl)acetate pocket. Residues 153-500 (EFRGAKMLIM…LIRNPNTYSS (348 aa)) are Cytoplasmic-facing. 3 positions are modified to phosphoserine: S226, S243, and S283. A disordered region spans residues 310 to 351 (APNPEFSSTTTSTANKSVNKNPKDVNTNQQTTLPTGGKSNSH). The span at 314–348 (EFSSTTTSTANKSVNKNPKDVNTNQQTTLPTGGKS) shows a compositional bias: polar residues. At T322 the chain carries Phosphothreonine. Phosphoserine is present on S366. Disordered stretches follow at residues 372-391 (AGLN…RSDQ) and 404-471 (SHNG…SQRK). A compositionally biased stretch (basic and acidic residues) spans 430–442 (GKEEEAERPKDAE). Polar residues predominate over residues 449-460 (APNSTAALQSKT). The chain crosses the membrane as a helical span at residues 501-521 (LIGLIWALVAFRWHVAMPKII). Topologically, residues 522–524 (QQS) are extracellular. Residues 525–545 (ISILSDAGLGMAMFSLGLFMA) traverse the membrane as a helical segment. Over 546–559 (LQPKLIACGNSVAT) the chain is Cytoplasmic. The helical transmembrane segment at 560–580 (FAMAVRFLTGPAVMAVAAIAI) threads the bilayer. Residues 581–585 (GLRGD) lie on the Extracellular side of the membrane. Residues 586-606 (LLRVAIVQAALPQGIVPFVFA) form a helical membrane-spanning segment. Residues I600 and V601 each contribute to the (indol-3-yl)acetate site. Residues 607–619 (KEYNVHPAILSTG) lie on the Cytoplasmic side of the membrane. The helical transmembrane segment at 620–640 (VIFGMLIALPITLVYYILLGL) threads the bilayer.

Belongs to the auxin efflux carrier (TC 2.A.69.1) family. In terms of assembly, homodimer. In terms of tissue distribution, predominantly expressed at the lateral side of shoot endodermis cells as well as root pericycle and columella cells.

It is found in the cell membrane. Auxin efflux carrier activity is competitively inhibited by naptalamate (N-1-naphthylphthalamic acid, NPA). In terms of biological role, acts as a component of the auxin efflux carrier; this activity is enhanced when activated by PID-mediated phosphorylation. Seems to be involved in the lateral auxin transport system. Together with PIN4 and PIN7, involved in the connective auxin transport (CAT) that ensures communication across the shoot system, and modulates strigolactone-mediated shoot branching control. Binds auxins including indole-3-acetic acid (IAA). Coordinated polar localization of PIN3 is directly regulated by the vesicle trafficking process. The sequence is that of Auxin efflux carrier component 3 from Arabidopsis thaliana (Mouse-ear cress).